Reading from the N-terminus, the 984-residue chain is Shutoff protein (984 aa).

Residues 131-231 (GVAAESDPSD…DLERDALVAP (101 aa)) are disordered. Residues 137–147 (DPSDDEPDPEP) are compositionally biased toward acidic residues. Basic and acidic residues predominate over residues 148 to 159 (EYDHREADHDSD). The span at 176-186 (VDEEPQDDSPS) shows a compositional bias: acidic residues. The span at 190–202 (TASTVIEEAQTSA) shows a compositional bias: polar residues. A compositionally biased stretch (basic and acidic residues) spans 205–216 (DSHDDDTHRDDG). Residues 411–476 (LMETLLQPFA…AVRYTATLEL (66 aa)) form a binding to host EIF4G region. The region spanning 479 to 597 (RVFREPSMVK…RLYSLPNPTA (119 aa)) is the RRM domain. 2 disordered regions span residues 810 to 853 (GVYK…GNRA) and 876 to 984 (KVGP…RQEE). At tyrosine 812 the chain carries Phosphotyrosine; by host. Residues 913–923 (AGGRRFGRRNT) are compositionally biased toward basic residues. A compositionally biased stretch (low complexity) spans 945 to 958 (RGQQGEHPTTSPSA).

The protein belongs to the adenoviridae shutoff protein family. As to quaternary structure, monomer. Interacts with hexon protein; this interaction allows chaperoning and trimerization of hexon proteins. Interacts (via N-terminus) with host initiation factor EIF4G (via C-terminus). Interacts (via RRM domain) with viral mRNAs that contain the tripartite leader; this interaction allows ribosome shunting and expression of viral late mRNAs. Post-translationally, might be cleaved by the viral protease. In terms of processing, phosphorylated. Tyrosine phosphorylation enhances preferential binding to tripartite leader mRNAs and allows ribosome shunting. Methylated. Asymmetric dimethylation by host PRMT1 of the Arg/Gly-rich region may regulate shutoff protein binding to hexon and promote the capsid assembly in the nucleus.

Its subcellular location is the host cytoplasm. In terms of biological role, protein that inhibits host translation while promoting late viral translation by ribosome shunting. Blocks host cap-dependent translation by binding to eIF4G, displacing MKNK1 from cap initiation complexes and preventing EIF4E phosphorylation. Binds to the tripartite leader sequence of viral late mRNAs and recruits host eIF4G, PABPC1/poly-A binding protein and 40S ribosomes subunits on viral mRNAs, allowing ribosome shunting and efficient translation of late viral mRNAs even though conventional translation via ribosome scanning from the cap has been shut off in the host cell. During assembly, acts as a chaperone protein that helps hexon proteins assembly into trimers. The sequence is that of Shutoff protein from Galliformes (FAdV-1).